A 931-amino-acid polypeptide reads, in one-letter code: Myocardin-related transcription factor A (931 aa).

The tract at residues 1–256 is mediates interaction with SCAI and ACTB; it reads MPPLKSPAAF…KQDRGAPPMD (256 aa). Phosphoserine is present on Ser6. The tract at residues 6–23 is intervening spacer sequence 1; that stretch reads SPAAFHEQRRSLERARTE. Residues 24–49 form an RPEL 1 repeat; that stretch reads DYLKRKIRSRPERSELVRMHILEETS. The Bipartite Nuclear localization signal motif lies at 27–65; sequence KRKIRSRPERSELVRMHILEETSAEPSLQAKQLKLKRAR. The intervening spacer sequence 2 stretch occupies residues 50 to 67; it reads AEPSLQAKQLKLKRARLA. An RPEL 2 repeat occupies 68 to 93; it reads DDLNEKIAQRPGPMELVEKNILPVES. Disordered regions lie at residues 110-256 and 290-344; these read ADSS…PPMD and PAPP…GALP. Residues Ser124, Ser139, and Ser156 each carry the phosphoserine modification. The span at 151-162 shows a compositional bias: polar residues; that stretch reads SATSASPTQVVS. Over residues 180–189 the composition is skewed to pro residues; sequence PPLPPPPLLP. A compositionally biased stretch (polar residues) spans 191–215; that stretch reads SLTNGTTIPTAKSTPTLIKQSQPKS. Residues 216–231 are compositionally biased toward basic and acidic residues; that stretch reads ASEKSQRSKKAKELKP. The residue at position 305 (Thr305) is a Phosphothreonine. 2 positions are modified to phosphoserine: Ser310 and Ser312. Residues 310–320 show a composition bias toward low complexity; sequence SLSTTNSSSSS. A Phosphothreonine modification is found at Thr313. Ser317, Ser320, and Ser333 each carry phosphoserine. The SAP domain maps to 347–381; sequence LDDMKVAELKQELKLRSLPVSGTKTELIERLRAYQ. 2 positions are modified to phosphoserine: Ser385 and Ser446. Residues 444-476 are disordered; it reads FGSTGSTPPVSPTPSERSLLSTGDENSTPGDTF. A Phosphothreonine modification is found at Thr447. Ser449 carries the phosphoserine modification. Phosphothreonine is present on Thr450. Position 454 is a phosphoserine (Ser454). At Thr456 the chain carries Phosphothreonine. Ser458 is subject to Phosphoserine. A compositionally biased stretch (polar residues) spans 459 to 473; sequence ERSLLSTGDENSTPG. A phosphoserine mark is found at Ser482, Ser492, Ser507, and Ser511. Positions 515–563 form a coiled coil; the sequence is RAELEGRDKDQMLQEKDKQIEALTRMLRQKQQLVERLKLQLEQEKRAQQ. 3 disordered regions span residues 558-577, 674-746, and 763-816; these read EKRA…PVKQ, KNAD…SSSQ, and ADFK…RLED. A compositionally biased stretch (low complexity) spans 678–694; that stretch reads SPGLSSGSPQQPSSQPG. Phosphoserine occurs at positions 685, 691, and 695. A compositionally biased stretch (polar residues) spans 732–746; that stretch reads MSQQPKQQENGSSSQ. Residues 763-778 are compositionally biased toward basic and acidic residues; the sequence is ADFKEPPSLPGKEKPS. The segment covering 784–799 has biased composition (low complexity); the sequence is GSPLAAQPSPSAELPQ. Residues Ser792, Ser807, and Ser859 each carry the phosphoserine modification.

In terms of assembly, interacts with SRF, forming the SRF-MRTFA nuclear complex which binds the 5'-CArG-3' consensus motif (CArG box) on DNA via SRF. Interacts (via RPEL repeats) with globular actin (G-actin), thereby regulating its subcellular location and activity of the complex formed with SRF. Either forms a trivalent (by binding three G-actin monomers) or pentavalent (by binding five G-actin monomers) complex with G-actin. Forms a nuclear ternary complex with SCAI and SRF, leading to suppress MRTFA-induced SRF transcriptional activity. Interacts with beta-actin (ACTB); interaction with ACTB prevents interaction with SCAI. Interacts with MRTFB. Phosphorylation at Ser-6 by Erk inhibits binding of globular actin (G-actin), unmasking the nuclear localization signal (NLS) and promoting nuclear import. In terms of tissue distribution, ubiquitously expressed, has been detected in lung, placenta, small intestine, liver, kidney, spleen, thymus, colon, muscle, heart and brain. Expressed in peripheral blood mononuclear cells (at protein level).

It is found in the cytoplasm. Its subcellular location is the nucleus. Functionally, transcription coactivator that associates with the serum response factor (SRF) transcription factor to control expression of genes regulating the cytoskeleton during development, morphogenesis and cell migration. The SRF-MRTFA complex activity responds to Rho GTPase-induced changes in cellular globular actin (G-actin) concentration, thereby coupling cytoskeletal gene expression to cytoskeletal dynamics. MRTFA binds G-actin via its RPEL repeats, regulating activity of the MRTFA-SRF complex. Activity is also regulated by filamentous actin (F-actin) in the nucleus. In Homo sapiens (Human), this protein is Myocardin-related transcription factor A.